The sequence spans 96 residues: MSRVCELTGKGPMTGNNVSHANNKTKRRFLPNLSDVTLGSDLLDRRFKFRISNAALRTVDHRGGLDAFMAKAKDDELSTRALKIKKEIVKAQAAQA.

The tract at residues 1–21 (MSRVCELTGKGPMTGNNVSHA) is disordered.

It belongs to the bacterial ribosomal protein bL28 family.

The sequence is that of Large ribosomal subunit protein bL28 from Jannaschia sp. (strain CCS1).